The following is a 366-amino-acid chain: tRNA N6-adenosine threonylcarbamoyltransferase (366 aa).

Fe cation is bound by residues His-119 and His-123. Substrate is bound by residues 142-146 (LVSGG), Asp-175, Gly-188, Asp-192, and Asn-281. Residue Asp-309 coordinates Fe cation.

It belongs to the KAE1 / TsaD family. The cofactor is Fe(2+).

It localises to the cytoplasm. The enzyme catalyses L-threonylcarbamoyladenylate + adenosine(37) in tRNA = N(6)-L-threonylcarbamoyladenosine(37) in tRNA + AMP + H(+). In terms of biological role, required for the formation of a threonylcarbamoyl group on adenosine at position 37 (t(6)A37) in tRNAs that read codons beginning with adenine. Is involved in the transfer of the threonylcarbamoyl moiety of threonylcarbamoyl-AMP (TC-AMP) to the N6 group of A37, together with TsaE and TsaB. TsaD likely plays a direct catalytic role in this reaction. The chain is tRNA N6-adenosine threonylcarbamoyltransferase from Synechococcus sp. (strain JA-3-3Ab) (Cyanobacteria bacterium Yellowstone A-Prime).